The following is a 310-amino-acid chain: Porphobilinogen deaminase (310 aa).

Cys242 carries the S-(dipyrrolylmethanemethyl)cysteine modification.

The protein belongs to the HMBS family. As to quaternary structure, monomer. The cofactor is dipyrromethane.

It catalyses the reaction 4 porphobilinogen + H2O = hydroxymethylbilane + 4 NH4(+). It functions in the pathway porphyrin-containing compound metabolism; protoporphyrin-IX biosynthesis; coproporphyrinogen-III from 5-aminolevulinate: step 2/4. Tetrapolymerization of the monopyrrole PBG into the hydroxymethylbilane pre-uroporphyrinogen in several discrete steps. The chain is Porphobilinogen deaminase from Shewanella sp. (strain W3-18-1).